A 351-amino-acid polypeptide reads, in one-letter code: DNA polymerase IV (351 aa).

In terms of domain architecture, UmuC spans 4–185 (IIHVDMDCFF…LPLAKIPGVG (182 aa)). Residues D8 and D103 each contribute to the Mg(2+) site. E104 is a catalytic residue.

Belongs to the DNA polymerase type-Y family. In terms of assembly, monomer. Requires Mg(2+) as cofactor.

The protein localises to the cytoplasm. The enzyme catalyses DNA(n) + a 2'-deoxyribonucleoside 5'-triphosphate = DNA(n+1) + diphosphate. Functionally, poorly processive, error-prone DNA polymerase involved in untargeted mutagenesis. Copies undamaged DNA at stalled replication forks, which arise in vivo from mismatched or misaligned primer ends. These misaligned primers can be extended by PolIV. Exhibits no 3'-5' exonuclease (proofreading) activity. May be involved in translesional synthesis, in conjunction with the beta clamp from PolIII. The polypeptide is DNA polymerase IV (Salmonella choleraesuis (strain SC-B67)).